The sequence spans 404 residues: Formate-dependent phosphoribosylglycinamide formyltransferase (404 aa).

Residues 25–26 (EL) and Glu-85 contribute to the N(1)-(5-phospho-beta-D-ribosyl)glycinamide site. ATP contacts are provided by residues Arg-118, Lys-159, 164 to 169 (SSGKGQ), 199 to 202 (EGFI), and Glu-207. The ATP-grasp domain occupies 123–318 (RLAAEELGLP…EFELHARAIL (196 aa)). The Mg(2+) site is built by Glu-277 and Glu-289. N(1)-(5-phospho-beta-D-ribosyl)glycinamide-binding positions include Asp-296, Lys-365, and 372 to 373 (RR). The segment at 384–404 (TDEARSRAKQAAAAVRPVSAK) is disordered. Low complexity predominate over residues 392–404 (KQAAAAVRPVSAK).

It belongs to the PurK/PurT family. Homodimer.

It catalyses the reaction N(1)-(5-phospho-beta-D-ribosyl)glycinamide + formate + ATP = N(2)-formyl-N(1)-(5-phospho-beta-D-ribosyl)glycinamide + ADP + phosphate + H(+). It participates in purine metabolism; IMP biosynthesis via de novo pathway; N(2)-formyl-N(1)-(5-phospho-D-ribosyl)glycinamide from N(1)-(5-phospho-D-ribosyl)glycinamide (formate route): step 1/1. In terms of biological role, involved in the de novo purine biosynthesis. Catalyzes the transfer of formate to 5-phospho-ribosyl-glycinamide (GAR), producing 5-phospho-ribosyl-N-formylglycinamide (FGAR). Formate is provided by PurU via hydrolysis of 10-formyl-tetrahydrofolate. This chain is Formate-dependent phosphoribosylglycinamide formyltransferase, found in Paraburkholderia xenovorans (strain LB400).